We begin with the raw amino-acid sequence, 1375 residues long: MAQANSRSRNSATISYPEKRRARVNLGKREVEILKTPYLLETQIESYRKFLQKDIAAEKREDNGLHAAFKSVFPITSYSGYAVLEYVGYSLGGESTLFDVEECKLRGLTYAAPLKVNMRLVIYDKEAPAGKKAIKDIKEQEVYMGEIPLMTETGSLVINGTERVVVSQLHRSPGVFFEHDKGKTHSSGKLLYSARVIPYRGSWLDFEFDPKDCLFVRIDRRRKLPATVILRALGYDTEQILDMFYKTNHFHLNQETVTLDLIPQRLRGELAVVEIKDKKGKVIVEANRRISARHIRLIEKAEINKLELPDDYLYGKVIGKTIIDKETGEIIAHANEEITAELLKNLRATKTASLDTLYINEIECGPYVSDTLRLDTTTNQLEALVEIYRIMRPGEPPTKEAAESLFENLFFSPERYSLSAVGRMKFNRRVGRKELTGLDVLSKEDIVDVLRVLVDIRDGKGDVDDIDHLGNRRIRSVGEMAENQFRVGLVRVERAVKDRLSLADVENLMPQDLVNAKPVSAAIKEFFGSSQLSQFMDQNNPLSEITHKRRVSALGPGGLTRERAGFEVRDVHVTHYGRVCPIETPEGPNIGLINSLAVFARANEYGFLETPYRKVVDRVVTDETEYLSAIEEGDYYIAQANTNVDGKGRLVDDLISCRYKGEFTLTTPDKINYMDVSPRQIVSVAAALIPFLEHDDANRALMGSNMQRQAVPTIRPETPLVGTGMERTVAVDSGVTVIAKRSGVIDSVDASRIVVRVDRKETEDDDDIGVDIYNLTKFTRSNQNTCINQHPIVEVGDKVQKGDVLADGPSTDIGELALGQNLLVAFMPWNGYNFEDSILISERLVEEDRFTTIHIQEFTCVARDTKLGPEEITSDIPNVGESALAKLDESGIVHIGAEVNAGDILVGKVTPKGETQLTPEEKLLRAIFGEKASDVKDTSLRVTPGITGTVIDVRIFTREGIKKDERTLEIEKAELSKVEKDLNDELRVREDALFENLEKLLTGRVAAGGPNKLAKGTKITKSYLADLPRQKWFEIRLQDDAATKRLEASHEHFKELRETRDAKLKDSRQKLTQGGDLAPGVIKIVKVYLAVKRRIQPGDKMAGRHGNKGVISTIVPIEDMPYLEDGTPVDIVLNPLGVPSRMNIGQVLETHLGWAAKGLGKKIGEMIEKGADAKELRNSLKPIYDLSKTQRFDLEALEDPEIVTLAKNLRKGVPISSPVFDGATEEEIKQLLKMADLPTSGQAALYDGRTGKKFDRSVTVGYMYMLKLNHLVDDKMHARSTGSYSLVTQQPLGGKAQFGGQRFGEMEVWALEAYGAAYTLQEMLTVKSDDVAGRTRMYKNIVDGDHRMDAGMPESFNVLVKEIRSLAIDIGLEND.

This sequence belongs to the RNA polymerase beta chain family. As to quaternary structure, the RNAP catalytic core consists of 2 alpha, 1 beta, 1 beta' and 1 omega subunit. When a sigma factor is associated with the core the holoenzyme is formed, which can initiate transcription.

It carries out the reaction RNA(n) + a ribonucleoside 5'-triphosphate = RNA(n+1) + diphosphate. Functionally, DNA-dependent RNA polymerase catalyzes the transcription of DNA into RNA using the four ribonucleoside triphosphates as substrates. This is DNA-directed RNA polymerase subunit beta from Coxiella burnetii (strain RSA 331 / Henzerling II).